A 197-amino-acid polypeptide reads, in one-letter code: Large ribosomal subunit protein bL25 (197 aa).

Belongs to the bacterial ribosomal protein bL25 family. CTC subfamily. Part of the 50S ribosomal subunit; part of the 5S rRNA/L5/L18/L25 subcomplex. Contacts the 5S rRNA. Binds to the 5S rRNA independently of L5 and L18.

This is one of the proteins that binds to the 5S RNA in the ribosome where it forms part of the central protuberance. This Lawsonia intracellularis (strain PHE/MN1-00) protein is Large ribosomal subunit protein bL25.